Here is a 140-residue protein sequence, read N- to C-terminus: Large ribosomal subunit protein uL11 (140 aa).

Belongs to the universal ribosomal protein uL11 family. In terms of assembly, part of the ribosomal stalk of the 50S ribosomal subunit. Interacts with L10 and the large rRNA to form the base of the stalk. L10 forms an elongated spine to which L12 dimers bind in a sequential fashion forming a multimeric L10(L12)X complex. Post-translationally, one or more lysine residues are methylated.

In terms of biological role, forms part of the ribosomal stalk which helps the ribosome interact with GTP-bound translation factors. This is Large ribosomal subunit protein uL11 from Syntrophobacter fumaroxidans (strain DSM 10017 / MPOB).